The following is a 344-amino-acid chain: Dihydroorotase (344 aa).

2 residues coordinate Zn(2+): histidine 13 and histidine 15. Substrate-binding positions include histidine 15–arginine 17 and asparagine 41. Zn(2+) contacts are provided by lysine 99, histidine 136, and histidine 174. An N6-carboxylysine modification is found at lysine 99. Residue histidine 136 coordinates substrate. Leucine 219 contacts substrate. A Zn(2+)-binding site is contributed by aspartate 247. The active site involves aspartate 247. The substrate site is built by histidine 251 and alanine 263.

The protein belongs to the metallo-dependent hydrolases superfamily. DHOase family. Class II DHOase subfamily. In terms of assembly, homodimer. Zn(2+) is required as a cofactor.

The catalysed reaction is (S)-dihydroorotate + H2O = N-carbamoyl-L-aspartate + H(+). Its pathway is pyrimidine metabolism; UMP biosynthesis via de novo pathway; (S)-dihydroorotate from bicarbonate: step 3/3. Catalyzes the reversible cyclization of carbamoyl aspartate to dihydroorotate. The polypeptide is Dihydroorotase (Azoarcus sp. (strain BH72)).